The primary structure comprises 301 residues: uncharacterized protein (301 aa).

It belongs to the asfivirus E301R family. As to quaternary structure, interacts with host IRF3.

Functionally, plays a role in the inhibition of host innate immune system by acting as a negatively regulator of type I interferon production. Mechanistically, interacts with and prevents host IRF3 nuclear localization to inhibit its transcriptional activity. This is an uncharacterized protein from African swine fever virus (isolate Tick/South Africa/Pretoriuskop Pr4/1996) (ASFV).